Consider the following 156-residue polypeptide: Large ribosomal subunit protein bL17 (156 aa).

The disordered stretch occupies residues 127–156 (RATRAAASKKAAEEKAAEAAEEKDEAAEEK). A compositionally biased stretch (basic and acidic residues) spans 136–146 (KAAEEKAAEAA). Acidic residues predominate over residues 147–156 (EEKDEAAEEK).

The protein belongs to the bacterial ribosomal protein bL17 family. Part of the 50S ribosomal subunit. Contacts protein L32.

The protein is Large ribosomal subunit protein bL17 of Corynebacterium urealyticum (strain ATCC 43042 / DSM 7109).